We begin with the raw amino-acid sequence, 132 residues long: Ribonuclease P protein component 4 (132 aa).

Zn(2+)-binding residues include C67, C70, C96, and C99.

Belongs to the eukaryotic/archaeal RNase P protein component 4 family. In terms of assembly, consists of a catalytic RNA component and at least 4-5 protein subunits. Zn(2+) is required as a cofactor.

It localises to the cytoplasm. The catalysed reaction is Endonucleolytic cleavage of RNA, removing 5'-extranucleotides from tRNA precursor.. In terms of biological role, part of ribonuclease P, a protein complex that generates mature tRNA molecules by cleaving their 5'-ends. In Thermococcus kodakarensis (strain ATCC BAA-918 / JCM 12380 / KOD1) (Pyrococcus kodakaraensis (strain KOD1)), this protein is Ribonuclease P protein component 4.